A 74-amino-acid chain; its full sequence is ATP synthase subunit 9, mitochondrial (74 aa).

2 helical membrane passes run 8-28 and 50-70; these read IGAG…GNVF and ILGF…AFLI.

Belongs to the ATPase C chain family. In terms of assembly, F-type ATPases have 2 components, CF(1) - the catalytic core - and CF(0) - the membrane proton channel. CF(1) has five subunits: alpha(3), beta(3), gamma(1), delta(1), epsilon(1). CF(0) has three main subunits: a, b and c.

It localises to the mitochondrion membrane. In terms of biological role, this protein is one of the chains of the nonenzymatic membrane component (F0) of mitochondrial ATPase. In Triticum aestivum (Wheat), this protein is ATP synthase subunit 9, mitochondrial (ATP9).